A 381-amino-acid polypeptide reads, in one-letter code: Short-chain dehydrogenase anuD (381 aa).

NADP(+) contacts are provided by isoleucine 84, lysine 109, aspartate 133, asparagine 158, tyrosine 244, and lysine 248. Tyrosine 244 serves as the catalytic Proton acceptor. The Proton donor role is filled by tyrosine 244. Catalysis depends on lysine 248, which acts as the Lowers pKa of active site Tyr.

Belongs to the short-chain dehydrogenases/reductases (SDR) family.

In terms of biological role, highly reducing polyketide synthase; part of the gene cluster that mediates the biosynthesis of annullatin D, an alkylated aromatic polyketide with a fused dihydrobenzofuran lactone ring system that exhibits potent agonistic activities toward the cannabinoid receptors. AnuD does not seem to play a role within the pathway. The annullatin backbone 2-hydroxymethyl-3-pentylphenol is assembled from one acetyl-CoA starter unit and 5 malonyl-CoA elongation units by cooperation of the highly reducing polyketide synthase anuA, the short-chain dehydrogenase anuB and the oxidoreductase anuC, before being hydroxylated at the C-5 alkyl chain by the cytochrome P450 monooxygenase anuE to form (8S)-annullatin E. The prenyltransferase anuH subsequently installs one isoprenyl group at the benzene ring to form (8S)-annullatin J. Enzymatic or nonenzymatic dihydro-benzofuran ring formation between the prenyl and the phenolic hydroxyl groups in (8S)-annullatin J results in two diastereomers (2S,9S)-annullatin H and compound 12. The intermediate (2S,9S)-annullatin H is then converted to (2S,9S)-annullatin D by the FAD-linked oxidoreductase anuG-catalyzed five-member lactone ring formation. The isomer 12 acts as a substrate for the short-chain dehydrogenase anuF and is oxidized to (2R)-annullatin F, which is subsequently acetylated by an acetyltransferase leading to (2R)-annullatin G formation. The remaining enzymes identified within the cluster, anuD, anuI and anuJ, seem not to be involved in annullatin biosynthesis. This Penicillium roqueforti (strain FM164) protein is Short-chain dehydrogenase anuD.